We begin with the raw amino-acid sequence, 219 residues long: Phosphoribosylformylglycinamidine synthase subunit PurQ (219 aa).

Residues 2–219 (KIAVITFPGS…KVVLDLILGS (218 aa)) form the Glutamine amidotransferase type-1 domain. Cysteine 86 serves as the catalytic Nucleophile. Catalysis depends on residues histidine 195 and glutamate 197.

In terms of assembly, part of the FGAM synthase complex composed of 1 PurL, 1 PurQ and 2 PurS subunits.

The protein localises to the cytoplasm. The enzyme catalyses N(2)-formyl-N(1)-(5-phospho-beta-D-ribosyl)glycinamide + L-glutamine + ATP + H2O = 2-formamido-N(1)-(5-O-phospho-beta-D-ribosyl)acetamidine + L-glutamate + ADP + phosphate + H(+). It carries out the reaction L-glutamine + H2O = L-glutamate + NH4(+). Its pathway is purine metabolism; IMP biosynthesis via de novo pathway; 5-amino-1-(5-phospho-D-ribosyl)imidazole from N(2)-formyl-N(1)-(5-phospho-D-ribosyl)glycinamide: step 1/2. Part of the phosphoribosylformylglycinamidine synthase complex involved in the purines biosynthetic pathway. Catalyzes the ATP-dependent conversion of formylglycinamide ribonucleotide (FGAR) and glutamine to yield formylglycinamidine ribonucleotide (FGAM) and glutamate. The FGAM synthase complex is composed of three subunits. PurQ produces an ammonia molecule by converting glutamine to glutamate. PurL transfers the ammonia molecule to FGAR to form FGAM in an ATP-dependent manner. PurS interacts with PurQ and PurL and is thought to assist in the transfer of the ammonia molecule from PurQ to PurL. This chain is Phosphoribosylformylglycinamidine synthase subunit PurQ, found in Leptospira interrogans serogroup Icterohaemorrhagiae serovar copenhageni (strain Fiocruz L1-130).